The sequence spans 183 residues: Cuticle protein 2 (183 aa).

A signal peptide spans 1-15 (MKLIVVAALIGVCAG). Positions 58–121 (SQGFQYVYDT…AQGAHLPTPP (64 aa)) constitute a Chitin-binding type R&amp;R domain.

The protein is Cuticle protein 2 of Lonomia obliqua (Moth).